A 515-amino-acid chain; its full sequence is Serine/threonine-protein phosphatase PP-Z (515 aa).

A disordered region spans residues M1–T186. Residues P17–S30 show a composition bias toward polar residues. S18 is subject to Phosphoserine. Residues K40 to S51 show a composition bias toward basic and acidic residues. Positions E63 to P74 are enriched in pro residues. A compositionally biased stretch (polar residues) spans D91 to A109. Positions S126–S143 are enriched in low complexity. The Mn(2+) site is built by D248, H250, D276, and N308. H309 acts as the Proton donor in catalysis. Mn(2+) is bound by residues H357 and H432. A phosphoserine mark is found at S505 and S514.

This sequence belongs to the PPP phosphatase family. PP-Z subfamily. Mn(2+) serves as cofactor.

Its subcellular location is the cytoplasm. It catalyses the reaction O-phospho-L-seryl-[protein] + H2O = L-seryl-[protein] + phosphate. It carries out the reaction O-phospho-L-threonyl-[protein] + H2O = L-threonyl-[protein] + phosphate. This chain is Serine/threonine-protein phosphatase PP-Z (pzh1), found in Schizosaccharomyces pombe (strain 972 / ATCC 24843) (Fission yeast).